A 747-amino-acid polypeptide reads, in one-letter code: MRRETVGEFSSDDDDDILLELGTRPPRFTQIPPSSAALQTQIPTTLEVTTTTLNNKQSKNDNQLVNQLNKAQGEASMLRDKINFLNIEREKEKNIQAVKVNELQVKHLQELAKLKQELQKLEDEKKFLQMEARGKSKREVITNVKPPSTTLSTNTNTITPDSSSVAIEAKPQSPQSKKRKISDNLLKKNMVPLNPNRIIPDETSLFLESILLHQIIGADLSTIEILNRLKLDYITEFKFKNFVIAKGAPIGKSIVSLLLRCKKTLTLDRFIDTLLEDIAVLIKEISVHPNESKLAVPFLVALMYQIVQFRPSATHNLALKDCFLFICDLIRIYHHVLKVPIHESNMNLHVEPQIFQYELIDYLIISYSFDLLEGILRVLQSHPKQTYMEFFDENILKSFEFVYKLALTISYKPMVNVIFSAVEVVNIITSIILNMDNSSDLKSLISGSWWRDCITRLYALLEKEIKSGDVYNENVDTTTLHMSKYHDFFGLIRNIGDNELGGLISKLIYTDRLQSVPRVISKEDIGMDSDKFTAPIIGYKMEKWLLKLKDEVLNIFENLLMIYGDDATIVNGEMLIHSSKFLSREQALMIERYVGQDSPNLDLRCHLIEHTLTIIYRLWKDHFKQLREEQIKQVESQLIMSLWRFLVCQTETVTANEREMRDHRHLVDSLHDLTIKDQASYYEDAFEDLPEYIEEELKMQLNKRTGRIMQVKYDEKFQEMARTILESKSFDLTTLEEADSLYISMGL.

Serine 10, serine 11, and serine 76 each carry phosphoserine. Residues 62–139 (NQLVNQLNKA…MEARGKSKRE (78 aa)) adopt a coiled-coil conformation. The interval 145–180 (KPPSTTLSTNTNTITPDSSSVAIEAKPQSPQSKKRK) is disordered. Over residues 146–160 (PPSTTLSTNTNTITP) the composition is skewed to low complexity.

In terms of assembly, forms a complex with MEC1. Phosphorylated by MEC1 in a cell cycle dependent manner and in response to DNA damage.

It is found in the cytoplasm. It localises to the nucleus. In terms of biological role, forms a complex with the serine/threonine kinase MEC1 which activates checkpoint signaling upon genotoxic stresses. The MEC1-LCD1 complex is recruited by the single-strand-binding protein complex RPA to DNA lesions in order to initiate the DNA repair by homologous recombination, after the MRX-complex and TEL1 are displaced. Required for the recruitment of MEC1 to DNA lesions, the activation of CHK1 and RAD53 kinases and phosphorylation of RAD9 in response to DNA damage. Required for cell growth and meiotic recombination. The chain is DNA damage checkpoint protein LCD1 (LCD1) from Saccharomyces cerevisiae (strain ATCC 204508 / S288c) (Baker's yeast).